We begin with the raw amino-acid sequence, 310 residues long: tRNA-cytidine(32) 2-sulfurtransferase (310 aa).

The short motif at 47–52 is the PP-loop motif element; that stretch reads SGGKDS. 3 residues coordinate [4Fe-4S] cluster: cysteine 122, cysteine 125, and cysteine 213.

Belongs to the TtcA family. In terms of assembly, homodimer. Mg(2+) is required as a cofactor. It depends on [4Fe-4S] cluster as a cofactor.

The protein localises to the cytoplasm. It carries out the reaction cytidine(32) in tRNA + S-sulfanyl-L-cysteinyl-[cysteine desulfurase] + AH2 + ATP = 2-thiocytidine(32) in tRNA + L-cysteinyl-[cysteine desulfurase] + A + AMP + diphosphate + H(+). The protein operates within tRNA modification. Its function is as follows. Catalyzes the ATP-dependent 2-thiolation of cytidine in position 32 of tRNA, to form 2-thiocytidine (s(2)C32). The sulfur atoms are provided by the cysteine/cysteine desulfurase (IscS) system. This is tRNA-cytidine(32) 2-sulfurtransferase from Cronobacter sakazakii (strain ATCC BAA-894) (Enterobacter sakazakii).